A 492-amino-acid chain; its full sequence is Cytoplasmic dynein 1 light intermediate chain 2 (492 aa).

61-68 (GEDGSGKT) serves as a coordination point for ATP. 3 disordered regions span residues 187-206 (PEEGCQGSPQRRGPLTSGSD), 371-423 (AKQP…KNNA), and 437-492 (LSKK…ENEA). Ser194 is modified (phosphoserine). Residues 371–381 (AKQPATPTRAS) show a composition bias toward polar residues. 2 positions are modified to phosphoserine: Ser383 and Ser391. At Arg397 the chain carries Omega-N-methylarginine. Residue Thr441 is modified to Phosphothreonine. Phosphoserine occurs at positions 443 and 446. A compositionally biased stretch (polar residues) spans 452-469 (VQSTAKKSGQKTVLSNVQ). The span at 471 to 480 (ELDRMTRKPD) shows a compositional bias: basic and acidic residues. Positions 482 to 492 (MVTNSSTENEA) are enriched in polar residues.

Belongs to the dynein light intermediate chain family. Homodimer. The cytoplasmic dynein 1 complex consists of two catalytic heavy chains (HCs) and a number of non-catalytic subunits presented by intermediate chains (ICs), light intermediate chains (LICs) and light chains (LCs); the composition seems to vary in respect to the IC, LIC and LC composition. The heavy chain homodimer serves as a scaffold for the probable homodimeric assembly of the respective non-catalytic subunits. The ICs and LICs bind directly to the HC dimer and the LCs assemble on the IC dimer. Interacts with DYNC1H1; DYNC1LI1 and DYNC1LI2 bind mutually exclusive to DYNC1H.

It localises to the cytoplasm. The protein localises to the cytoskeleton. Functionally, acts as one of several non-catalytic accessory components of the cytoplasmic dynein 1 complex that are thought to be involved in linking dynein to cargos and to adapter proteins that regulate dynein function. Cytoplasmic dynein 1 acts as a motor for the intracellular retrograde motility of vesicles and organelles along microtubules. May play a role in binding dynein to membranous organelles or chromosomes. This is Cytoplasmic dynein 1 light intermediate chain 2 (DYNC1LI2) from Pongo abelii (Sumatran orangutan).